The following is a 481-amino-acid chain: Protein DETOXIFICATION 12 (481 aa).

12 helical membrane passes run 38 to 58 (LIFFAAPMAAVVIAQFMLQIV), 76 to 96 (LASSFCNVTGFSFIIGLSCAL), 117 to 137 (YTAMFCLALVCLPLSLIWFNM), 154 to 174 (AGKYATWLIPGLFAYAVLQPL), 187 to 207 (LLITSYVVFCIHVPLCWFLVY), 214 to 234 (LGGALAISLSNWLYAIFLGSF), 267 to 287 (AAMICLEWWSYELIILLSGLL), 296 to 316 (VLSVCLQTISTMYSIPLAIAA), 336 to 356 (IVVYAAMSLAVIDALIVSMSL), 380 to 400 (MAPLVSISLMLDALQGVLSGI), 415 to 435 (LGAFYLWGIPIAASLAFWIHL), and 438 to 458 (VGLWIGIQAGAVLQTLLLALV).

The protein belongs to the multi antimicrobial extrusion (MATE) (TC 2.A.66.1) family.

The protein localises to the membrane. The protein is Protein DETOXIFICATION 12 of Arabidopsis thaliana (Mouse-ear cress).